Here is a 213-residue protein sequence, read N- to C-terminus: Putative 3-methyladenine DNA glycosylase (213 aa).

It belongs to the DNA glycosylase MPG family.

This chain is Putative 3-methyladenine DNA glycosylase, found in Corynebacterium jeikeium (strain K411).